A 598-amino-acid polypeptide reads, in one-letter code: Aspartate--tRNA(Asp/Asn) ligase (598 aa).

Residue Glu-177 coordinates L-aspartate. Positions Gln-201–Lys-204 are aspartate. Residues Arg-223 and His-451 each coordinate L-aspartate. Arg-223 to Glu-225 is a binding site for ATP. Glu-485 contributes to the ATP binding site. Arg-492 lines the L-aspartate pocket. An ATP-binding site is contributed by Gly-537–Arg-540.

Belongs to the class-II aminoacyl-tRNA synthetase family. Type 1 subfamily. In terms of assembly, homodimer.

It is found in the cytoplasm. The enzyme catalyses tRNA(Asx) + L-aspartate + ATP = L-aspartyl-tRNA(Asx) + AMP + diphosphate. In terms of biological role, aspartyl-tRNA synthetase with relaxed tRNA specificity since it is able to aspartylate not only its cognate tRNA(Asp) but also tRNA(Asn). Reaction proceeds in two steps: L-aspartate is first activated by ATP to form Asp-AMP and then transferred to the acceptor end of tRNA(Asp/Asn). This is Aspartate--tRNA(Asp/Asn) ligase from Anaplasma phagocytophilum (strain HZ).